Reading from the N-terminus, the 1378-residue chain is DNA-directed RNA polymerase subunit beta (1378 aa).

This sequence belongs to the RNA polymerase beta chain family. As to quaternary structure, the RNAP catalytic core consists of 2 alpha, 1 beta, 1 beta' and 1 omega subunit. When a sigma factor is associated with the core the holoenzyme is formed, which can initiate transcription.

It carries out the reaction RNA(n) + a ribonucleoside 5'-triphosphate = RNA(n+1) + diphosphate. In terms of biological role, DNA-dependent RNA polymerase catalyzes the transcription of DNA into RNA using the four ribonucleoside triphosphates as substrates. The sequence is that of DNA-directed RNA polymerase subunit beta from Sorangium cellulosum (strain So ce56) (Polyangium cellulosum (strain So ce56)).